Here is a 505-residue protein sequence, read N- to C-terminus: Lysine--tRNA ligase (505 aa).

The Mg(2+) site is built by glutamate 415 and glutamate 422.

The protein belongs to the class-II aminoacyl-tRNA synthetase family. In terms of assembly, homodimer. It depends on Mg(2+) as a cofactor.

It localises to the cytoplasm. The enzyme catalyses tRNA(Lys) + L-lysine + ATP = L-lysyl-tRNA(Lys) + AMP + diphosphate. The chain is Lysine--tRNA ligase from Xanthomonas campestris pv. campestris (strain 8004).